The following is a 638-amino-acid chain: MDLWQLLLTLALAGSSDAFSGSEPTAAILSRASWSLQSVNPGLKTNSSKEPKFTKCRSPERETFSCHWTDAVHHGSKSLGPIQLFYTRRNIQGQTQEWKECPDYVSAGENSCYFNSSFTSVWIPYCIKLTSNGDTVDGKCFSVDEIVQPDPPIALNWTLLNVSLTGIHADILVRWEAPPNADIQKGWMVLEYELQYKEVNETKWKMMDPILSTSVPVYSLKVDKEYEVLVRSKRRNSRNYGEFSEVLYVTLPQMNQFTCEEDFYFPWLLIIIFGIFGLTVMLFVFLFSKQQRIKMLILPPVPVPKIKGINPDLLKEGKLEEVNAILAIHDSYKPEFHSDDSWVEFIELDIDEPDEKNEGSDTDRLLSSDHQKSHSNLGVKDGDSGRTSCYEPDILETDFNANNIHEGTSEVAQPQRLKGEADLLCLDQKNQNKSPYHDACPATQQPSVIQAEKNKPQPLPTDGAESTHQAAHIQLSNPSSLANIDFYAQVSDITPAGSVVLSPGQKNKAGMSQCDMHLEMVSLCQEDFIMDNAYFCEADAKKCIPVAPHIKVESHIEPSFNQEDIYITTESLTTTAGRPGTTEHIPGSEMPVPDYTSIHIVQSPQGLILNATALPLPGKEFLSSCGYVSTDQLNKIMP.

A signal peptide spans 1–18; it reads MDLWQLLLTLALAGSSDA. Topologically, residues 19–264 are extracellular; it reads FSGSEPTAAI…NQFTCEEDFY (246 aa). Asparagine 46 carries an N-linked (GlcNAc...) asparagine glycan. 2 cysteine pairs are disulfide-bonded: cysteine 56–cysteine 66 and cysteine 101–cysteine 112. N-linked (GlcNAc...) asparagine glycosylation occurs at asparagine 115. Cysteine 126 and cysteine 140 are oxidised to a cystine. In terms of domain architecture, Fibronectin type-III spans 151 to 254; it reads PPIALNWTLL…EVLYVTLPQM (104 aa). N-linked (GlcNAc...) asparagine glycans are attached at residues asparagine 156, asparagine 161, and asparagine 200. A WSXWS motif motif is present at residues 240-244; that stretch reads YGEFS. A helical membrane pass occupies residues 265 to 288; sequence FPWLLIIIFGIFGLTVMLFVFLFS. At 289–638 the chain is on the cytoplasmic side; sequence KQQRIKMLIL…STDQLNKIMP (350 aa). A required for JAK2 binding region spans residues 294–379; that stretch reads KMLILPPVPV…HQKSHSNLGV (86 aa). Residues 297 to 305 carry the Box 1 motif motif; sequence ILPPVPVPK. Residues 340 to 349 carry the UbE motif motif; that stretch reads DSWVEFIELD. Serine 341 carries the post-translational modification Phosphoserine. Residues 353 to 388 form a disordered region; sequence PDEKNEGSDTDRLLSSDHQKSHSNLGVKDGDSGRTS. Positions 356 to 372 are enriched in basic and acidic residues; sequence KNEGSDTDRLLSSDHQK. 2 positions are modified to phosphotyrosine: tyrosine 487 and tyrosine 595.

It belongs to the type I cytokine receptor family. Type 1 subfamily. In terms of assembly, on growth hormone (GH) binding, forms homodimers and binds JAK2 via a box 1-containing domain. Post-translationally, the soluble form (GHBP) is produced by phorbol ester-promoted proteolytic cleavage at the cell surface (shedding) by ADAM17/TACE. Shedding is inhibited by growth hormone (GH) binding to the receptor probably due to a conformational change in GHR rendering the receptor inaccessible to ADAM17. On GH binding, phosphorylated on tyrosine residues in the cytoplasmic domain by JAK2. In terms of processing, ubiquitinated by the ECS(SOCS2) complex following ligand-binding and phosphorylation by JAK2, leading to its degradation by the proteasome. Regulation by the ECS(SOCS2) complex acts as a negative feedback loop of growth hormone receptor signaling. Ubiquitination is not sufficient for GHR internalization.

The protein resides in the cell membrane. It localises to the secreted. Functionally, receptor for pituitary gland growth hormone (GH1) involved in regulating postnatal body growth. On ligand binding, couples to the JAK2/STAT5 pathway. In terms of biological role, the soluble form (GHBP) acts as a reservoir of growth hormone in plasma and may be a modulator/inhibitor of GH signaling. This Macaca mulatta (Rhesus macaque) protein is Growth hormone receptor (GHR).